The primary structure comprises 281 residues: Bifunctional protein FolD (281 aa).

Residues 164–166 (GRS) and Ser-189 each bind NADP(+).

This sequence belongs to the tetrahydrofolate dehydrogenase/cyclohydrolase family. As to quaternary structure, homodimer.

It carries out the reaction (6R)-5,10-methylene-5,6,7,8-tetrahydrofolate + NADP(+) = (6R)-5,10-methenyltetrahydrofolate + NADPH. The enzyme catalyses (6R)-5,10-methenyltetrahydrofolate + H2O = (6R)-10-formyltetrahydrofolate + H(+). It participates in one-carbon metabolism; tetrahydrofolate interconversion. Its function is as follows. Catalyzes the oxidation of 5,10-methylenetetrahydrofolate to 5,10-methenyltetrahydrofolate and then the hydrolysis of 5,10-methenyltetrahydrofolate to 10-formyltetrahydrofolate. The protein is Bifunctional protein FolD of Enterococcus faecalis (strain ATCC 700802 / V583).